The primary structure comprises 1905 residues: Low-density lipoprotein receptor-related protein 4 (1905 aa).

Positions 1–20 are cleaved as a signal peptide; that stretch reads MRRWWGALLLGALLCAHGIA. Residues 21 to 1725 are Extracellular-facing; sequence SSLECACGRS…AAPGEGLHVS (1705 aa). 8 LDL-receptor class A domains span residues 26-67, 70-106, 109-144, 147-183, 190-226, 230-266, 269-305, and 311-350; these read ACGR…DGCT, TCSP…QDCP, ECEE…EQCD, KCSD…ESCP, PCNL…SDCS, PCRS…RNCT, MCTA…ENCE, and QCAS…QNCR. 30 disulfides stabilise this stretch: Cys-27/Cys-44, Cys-34/Cys-57, Cys-51/Cys-66, Cys-71/Cys-83, Cys-78/Cys-96, Cys-90/Cys-105, Cys-110/Cys-122, Cys-117/Cys-135, Cys-129/Cys-143, Cys-148/Cys-160, Cys-155/Cys-173, Cys-167/Cys-182, Cys-191/Cys-203, Cys-198/Cys-216, Cys-210/Cys-225, Cys-231/Cys-243, Cys-238/Cys-256, Cys-250/Cys-265, Cys-270/Cys-282, Cys-277/Cys-295, Cys-289/Cys-304, Cys-312/Cys-324, Cys-319/Cys-337, Cys-331/Cys-349, Cys-358/Cys-369, Cys-365/Cys-378, Cys-380/Cys-393, Cys-399/Cys-409, Cys-405/Cys-418, and Cys-420/Cys-433. N-linked (GlcNAc...) asparagine glycosylation is present at Asn-264. Positions 354 to 394 constitute an EGF-like 1; atypical domain; the sequence is GEENCNVNNGGCAQKCQMVRGAVQCTCHTGYRLTEDGRTCQ. The region spanning 395-434 is the EGF-like 2; calcium-binding domain; the sequence is DVNECAEEGYCSQGCTNTEGAFQCWCEAGYELRPDRRSCK. LDL-receptor class B repeat units lie at residues 480–522, 523–565, 566–609, 610–652, and 653–693; these read ELVF…DWVH, DKLY…HPME, GTIY…DYAG, RRMY…FEDS, and LYWT…LHPQ. N-linked (GlcNAc...) asparagine glycosylation is present at Asn-498. The EGF-like 3 domain maps to 698 to 737; that stretch reads GKNRCGDNNGGCTHLCLPSGQNYTCACPTGFRKINSHACA. Cystine bridges form between Cys-702/Cys-713, Cys-709/Cys-722, and Cys-724/Cys-736. Asn-719 carries N-linked (GlcNAc...) asparagine glycosylation. LDL-receptor class B repeat units follow at residues 785–827, 828–870, 871–914, 915–956, and 957–998; these read DHVY…DWVT, NKLY…EPMG, GYMY…DYGS, QRLY…LYGQ, and RIYW…FHRQ. Residue Asn-901 is glycosylated (N-linked (GlcNAc...) asparagine). Asn-1077 carries N-linked (GlcNAc...) asparagine glycosylation. LDL-receptor class B repeat units lie at residues 1093-1135, 1136-1178, 1179-1222, 1223-1263, 1264-1306, 1397-1439, 1440-1482, 1483-1526, 1527-1568, and 1569-1610; these read GKVY…DAIG, RKVY…YHEM, GFMY…DKTS, SQLL…LLDS, YIYW…DRAQ, GKVY…DWVA, RNLY…FPRK, GYLF…DYDT, RRIY…QDRW, and IYWT…SPQR. Asn-1415 and Asn-1467 each carry an N-linked (GlcNAc...) asparagine glycan. Residues 1661-1696 are disordered; sequence ATSMNEKSPVLPNTLPTTLHSSTTKTRTSLEGAGGR. The span at 1674–1690 shows a compositional bias: low complexity; sequence TLPTTLHSSTTKTRTSL. A helical transmembrane segment spans residues 1726-1746; it reads YAIGGLLSILLILLVIAALML. Over 1747 to 1905 the chain is Cytoplasmic; the sequence is YRHRKSKFTD…ERKLSSESQV (159 aa). The tract at residues 1852–1905 is disordered; sequence ASSGSLDDTETEQLLQEEQSECSSVHTAATPERRGSLPDTGWKHERKLSSESQV. A compositionally biased stretch (basic and acidic residues) spans 1882-1905; sequence PERRGSLPDTGWKHERKLSSESQV.

This sequence belongs to the LDLR family. In terms of assembly, homooligomer. Interacts with MUSK; the heterodimer forms an AGRIN receptor complex that binds AGRIN resulting in activation of MUSK. Interacts (via the extracellular domain) with SOST; the interaction facilitates the inhibition of Wnt signaling. Interacts with MESD; the interaction promotes glycosylation of LRP4 and its cell-surface expression. N-glycosylation is required for cell surface location.

The protein resides in the cell membrane. Its function is as follows. Mediates SOST-dependent inhibition of bone formation. Functions as a specific facilitator of SOST-mediated inhibition of Wnt signaling. Plays a key role in the formation and the maintenance of the neuromuscular junction (NMJ), the synapse between motor neuron and skeletal muscle. Directly binds AGRIN and recruits it to the MUSK signaling complex. Mediates the AGRIN-induced phosphorylation of MUSK, the kinase of the complex. The activation of MUSK in myotubes induces the formation of NMJ by regulating different processes including the transcription of specific genes and the clustering of AChR in the postsynaptic membrane. Alternatively, may be involved in the negative regulation of the canonical Wnt signaling pathway, being able to antagonize the LRP6-mediated activation of this pathway. More generally, has been proposed to function as a cell surface endocytic receptor binding and internalizing extracellular ligands for degradation by lysosomes. Plays an essential role in the process of digit differentiation. The chain is Low-density lipoprotein receptor-related protein 4 (Lrp4) from Mus musculus (Mouse).